A 238-amino-acid polypeptide reads, in one-letter code: Putative ABC transporter ATP-binding protein AF_1841 (238 aa).

An ABC transporter domain is found at 8-238 (IEADSVSYDY…EELLEKAGVI (231 aa)). 41–48 (GANGSGKS) is a binding site for ATP.

This sequence belongs to the ABC transporter superfamily.

It is found in the cell membrane. In terms of biological role, probably part of an ABC transporter complex. Responsible for energy coupling to the transport system. This chain is Putative ABC transporter ATP-binding protein AF_1841, found in Archaeoglobus fulgidus (strain ATCC 49558 / DSM 4304 / JCM 9628 / NBRC 100126 / VC-16).